A 148-amino-acid chain; its full sequence is Ponticulin-like protein D (148 aa).

Positions 1-20 are cleaved as a signal peptide; it reads MLLNKSLLLLVAFVFAIVSA. A glycan (N-linked (GlcNAc...) asparagine) is linked at Asn67. The GPI-like-anchor amidated aspartate moiety is linked to residue Asp125. Positions 126–148 are cleaved as a propeptide — removed in mature form; the sequence is SSAAATMIASFSAILIALLFALL.

The protein belongs to the ponticulin family. Post-translationally, the GPI-like-anchor contains a phosphoceramide group, rather than a phosphatidyl group.

It is found in the cell membrane. This Dictyostelium discoideum (Social amoeba) protein is Ponticulin-like protein D (ponD).